Consider the following 609-residue polypeptide: Alpha-fetoprotein (609 aa).

The signal sequence occupies residues 1 to 18 (MKWVESIFLIFLLNFTES). Albumin domains lie at 19-210 (RTLH…ATVT), 211-402 (KELR…EELQ), and 403-601 (KYIQ…KLIS). His22 lines the Cu(2+) pocket. Cystine bridges form between Cys99-Cys114, Cys113-Cys124, Cys148-Cys193, Cys192-Cys201, Cys224-Cys270, Cys269-Cys277, Cys289-Cys303, and Cys302-Cys313. Residues Ser111, Ser115, and Ser117 each carry the phosphoserine; by FAM20C modification. Asn251 is a glycosylation site (N-linked (GlcNAc...) asparagine). Ser344 is modified (phosphoserine; by FAM20C). 7 disulfide bridges follow: Cys384–Cys393, Cys416–Cys462, Cys461–Cys472, Cys485–Cys501, Cys500–Cys511, Cys538–Cys583, and Cys582–Cys591. A phosphoserine; by FAM20C mark is found at Ser444 and Ser445.

The protein belongs to the ALB/AFP/VDB family. As to quaternary structure, dimeric and trimeric forms have been found in addition to the monomeric form. In terms of processing, independent studies suggest heterogeneity of the N-terminal sequence of the mature protein and of the cleavage site of the signal sequence. Sulfated. Plasma. Synthesized by the fetal liver and yolk sac.

The protein resides in the secreted. In terms of biological role, binds copper, nickel, and fatty acids as well as, and bilirubin less well than, serum albumin. Only a small percentage (less than 2%) of the human AFP shows estrogen-binding properties. The sequence is that of Alpha-fetoprotein (AFP) from Homo sapiens (Human).